Here is a 230-residue protein sequence, read N- to C-terminus: uncharacterized protein (230 aa).

In terms of domain architecture, HTH gntR-type spans 12–80 (KNLSYVLAEK…PRIGTRVMPQ (69 aa)). Positions 40–59 (EIELGEQFGVSRTAVREAVK) form a DNA-binding region, H-T-H motif.

This is an uncharacterized protein from Escherichia coli (strain K12).